Reading from the N-terminus, the 215-residue chain is Nascent polypeptide-associated complex subunit alpha (215 aa).

The tract at residues 1-81 (MPGEATETVP…SEKKARKAMS (81 aa)) is disordered. Over residues 9 to 21 (VPVTEQEMQQPQV) the composition is skewed to polar residues. Acidic residues predominate over residues 29–42 (SDSDDSVPELEEQD). A compositionally biased stretch (low complexity) spans 43–57 (SAQTQTQQAQLAAAA). The NAC-A/B domain occupies 70–135 (SRSEKKARKA…AKIEDLSQQA (66 aa)). Residues 176–213 (VEVKDIELVMSQANVSRAKAVRALKNNNNDIVNAIMEL) enclose the UBA domain.

The protein belongs to the NAC-alpha family.

In terms of biological role, may promote appropriate targeting of ribosome-nascent polypeptide complexes. This is Nascent polypeptide-associated complex subunit alpha (naca) from Oreochromis niloticus (Nile tilapia).